Reading from the N-terminus, the 279-residue chain is Oxygen-dependent coproporphyrinogen-III oxidase (279 aa).

Ser102 is a binding site for substrate. 2 residues coordinate a divalent metal cation: His106 and His116. The active-site Proton donor is the His116. 118–120 (NTR) contributes to the substrate binding site. A divalent metal cation contacts are provided by His149 and His179. The interval 244–279 (YVEFNLLYDRGTKFGLMTDGNVEAILMSLPPEVKFN) is important for dimerization.

It belongs to the aerobic coproporphyrinogen-III oxidase family. Homodimer. A divalent metal cation is required as a cofactor.

It is found in the cytoplasm. The catalysed reaction is coproporphyrinogen III + O2 + 2 H(+) = protoporphyrinogen IX + 2 CO2 + 2 H2O. It functions in the pathway porphyrin-containing compound metabolism; protoporphyrin-IX biosynthesis; protoporphyrinogen-IX from coproporphyrinogen-III (O2 route): step 1/1. In terms of biological role, involved in the heme biosynthesis. Catalyzes the aerobic oxidative decarboxylation of propionate groups of rings A and B of coproporphyrinogen-III to yield the vinyl groups in protoporphyrinogen-IX. This is Oxygen-dependent coproporphyrinogen-III oxidase from Rickettsia akari (strain Hartford).